The primary structure comprises 450 residues: MKRRYFGTDGIRGQSNVFPMTPDLAMRVGIAAGTIFRRGNHRHRVVIGKDTRLSGYMLENAMVAGFTAAGLDAFILGPIPTPAVAMLTRSLRCDIGVMISASHNPYEDNGIKLFGPDGYKLSDDIEAEIEDLLEKDLSTQLAKSDDIGRAKRVDGVHDRYIEHAKRTLPRDVTLQGLRIAIDCANGAAYKVAPAVLWELGADVVTIGNEPNGTNINLNCGSTSPVALQKKVDEVRADIGIALDGDADRVIIVDENGSIVDGDQLMAVIAESWAESQQLRGNGIVATVMSNLGLERFLDERGMALARTKVGDRYVVEHMRQHNYNVGGEQSGHIVLSDYGTTGDGLVAALQILAAVKRTGRTVSEVCRRFEPVPQLLRNVRISGGKPLEDIQVQKAIADAEAELAKTGRLVIRPSGTEPLIRVMAEGDDRAQIERIVNELIGTISNVRSAA.

Catalysis depends on serine 102, which acts as the Phosphoserine intermediate. Residues serine 102, aspartate 243, aspartate 245, and aspartate 247 each contribute to the Mg(2+) site. Serine 102 is subject to Phosphoserine.

The protein belongs to the phosphohexose mutase family. Requires Mg(2+) as cofactor. In terms of processing, activated by phosphorylation.

The enzyme catalyses alpha-D-glucosamine 1-phosphate = D-glucosamine 6-phosphate. In terms of biological role, catalyzes the conversion of glucosamine-6-phosphate to glucosamine-1-phosphate. The chain is Phosphoglucosamine mutase from Rhizobium etli (strain CIAT 652).